The chain runs to 442 residues: ATP-dependent protease ATPase subunit HslU (442 aa).

Residues isoleucine 18, 60–65 (GVGKTE), aspartate 255, glutamate 320, and arginine 392 each bind ATP.

Belongs to the ClpX chaperone family. HslU subfamily. As to quaternary structure, a double ring-shaped homohexamer of HslV is capped on each side by a ring-shaped HslU homohexamer. The assembly of the HslU/HslV complex is dependent on binding of ATP.

It localises to the cytoplasm. In terms of biological role, ATPase subunit of a proteasome-like degradation complex; this subunit has chaperone activity. The binding of ATP and its subsequent hydrolysis by HslU are essential for unfolding of protein substrates subsequently hydrolyzed by HslV. HslU recognizes the N-terminal part of its protein substrates and unfolds these before they are guided to HslV for hydrolysis. The protein is ATP-dependent protease ATPase subunit HslU of Shewanella putrefaciens (strain CN-32 / ATCC BAA-453).